Here is a 165-residue protein sequence, read N- to C-terminus: uncharacterized protein (165 aa).

Residues 1–17 form the signal peptide; it reads MIRGFFLILLFLLLAFF.

This is an uncharacterized protein from Aquifex aeolicus (strain VF5).